The chain runs to 249 residues: tRNA pseudouridine synthase A (249 aa).

The Nucleophile role is filled by Asp53. Tyr111 lines the substrate pocket.

It belongs to the tRNA pseudouridine synthase TruA family. As to quaternary structure, homodimer.

The catalysed reaction is uridine(38/39/40) in tRNA = pseudouridine(38/39/40) in tRNA. Formation of pseudouridine at positions 38, 39 and 40 in the anticodon stem and loop of transfer RNAs. This Streptococcus equi subsp. equi (strain 4047) protein is tRNA pseudouridine synthase A.